We begin with the raw amino-acid sequence, 825 residues long: Probable inorganic carbon transporter subunit DabA (825 aa).

The Zn(2+) site is built by Cys346, Asp348, His516, and Cys531.

It belongs to the inorganic carbon transporter (TC 9.A.2) DabA family. Forms a complex with DabB. The cofactor is Zn(2+).

The protein localises to the cell inner membrane. In terms of biological role, part of an energy-coupled inorganic carbon pump. The sequence is that of Probable inorganic carbon transporter subunit DabA from Paracidovorax citrulli (strain AAC00-1) (Acidovorax citrulli).